The chain runs to 440 residues: Glycerophosphocholine cholinephosphodiesterase ENPP6 (440 aa).

Residues 1-22 (MAVKLGTLLLALALGLAQPASA) form the signal peptide. Residues D32, S71, and N92 each coordinate substrate. Zn(2+) is bound by residues D32 and S71. The active-site Nucleophile is S71. S71 carries the phosphoserine modification. N-linked (GlcNAc...) asparagine glycans are attached at residues N100 and N118. C142 and C154 form a disulfide bridge. D193 contacts substrate. Zn(2+)-binding residues include D193, H197, D240, and H241. H241 contacts substrate. A glycan (N-linked (GlcNAc...) asparagine) is linked at N341. H354 is a binding site for substrate. H354 contacts Zn(2+). Residue N404 is glycosylated (N-linked (GlcNAc...) asparagine). S419 carries GPI-anchor amidated serine lipidation. A propeptide spans 420–440 (TAPPVWPSHCALALILLFLLA) (removed in mature form).

This sequence belongs to the nucleotide pyrophosphatase/phosphodiesterase family. In terms of assembly, homodimer; disulfide-linked. Homotetramer. The cofactor is Zn(2+). In terms of tissue distribution, predominantly expressed in kidney and brain. In the kidney, expressed specifically in the proximal tubules and thin descending limbs of Henle (at protein level).

It is found in the cell membrane. The enzyme catalyses sn-glycerol 3-phosphocholine + H2O = phosphocholine + glycerol + H(+). It carries out the reaction a 1-acyl-sn-glycero-3-phosphocholine + H2O = a 1-acyl-sn-glycerol + phosphocholine + H(+). The catalysed reaction is a 1-O-alkyl-sn-glycero-3-phosphocholine + H2O = a 1-O-alkyl-sn-glycerol + phosphocholine + H(+). It catalyses the reaction 1-dodecanoyl-sn-glycero-3-phosphocholine + H2O = 1-dodecanoyl-sn-glycerol + phosphocholine + H(+). The enzyme catalyses 1-hexadecanoyl-sn-glycero-3-phosphocholine + H2O = 1-hexadecanoyl-sn-glycerol + phosphocholine + H(+). It carries out the reaction 1-(5Z,8Z,11Z,14Z-eicosatetraenoyl)-sn-glycero-3-phosphocholine + H2O = 1-(5Z,8Z,11Z,14Z-eicosatetraenoyl)-sn-glycerol + phosphocholine + H(+). The catalysed reaction is 1-tetradecanoyl-sn-glycero-3-phosphocholine + H2O = 1-tetradecanoyl-sn-glycerol + phosphocholine + H(+). It catalyses the reaction sphing-4-enine-phosphocholine + H2O = sphing-4-enine + phosphocholine + H(+). The enzyme catalyses 1-(9Z-octadecenoyl)-sn-glycero-3-phosphocholine + H2O = 1-(9Z-octadecenoyl)-sn-glycerol + phosphocholine + H(+). It carries out the reaction 1-(9Z,12Z)-octadecadienoyl-sn-glycero-3-phosphocholine + H2O = 1-(9Z,12Z-octadecadienoyl)-sn-glycerol + phosphocholine + H(+). The catalysed reaction is glycero-2-phosphocholine + H2O = phosphocholine + glycerol + H(+). With respect to regulation, inhibited by EDTA and EGTA in vitro. Its function is as follows. Choline-specific glycerophosphodiesterase that hydrolyzes glycerophosphocholine (GPC) and lysophosphatidylcholine (LPC) and contributes to supplying choline to the cells. Has a preference for LPC with short (12:0 and 14:0) or polyunsaturated (18:2 and 20:4) fatty acids. In vitro, hydrolyzes only choline-containing lysophospholipids, such as sphingosylphosphorylcholine (SPC), platelet-activating factor (PAF) and lysoPAF, but not other lysophospholipids. In Homo sapiens (Human), this protein is Glycerophosphocholine cholinephosphodiesterase ENPP6.